Consider the following 320-residue polypeptide: ATP-dependent 6-phosphofructokinase (320 aa).

Glycine 11 contributes to the ATP binding site. Residue 21-25 (RAIAR) coordinates ADP. ATP-binding positions include 72–73 (RF) and 102–105 (GDGS). Aspartate 103 provides a ligand contact to Mg(2+). Residues 125-127 (TID), arginine 162, and 169-171 (MGR) each bind substrate. Aspartate 127 functions as the Proton acceptor in the catalytic mechanism. Residues 185-187 (GAD) and 213-215 (KDH) each bind ADP. Substrate contacts are provided by residues glutamate 222, arginine 243, and 249–252 (HIQR).

This sequence belongs to the phosphofructokinase type A (PFKA) family. ATP-dependent PFK group I subfamily. Prokaryotic clade 'B1' sub-subfamily. In terms of assembly, homotetramer. Mg(2+) is required as a cofactor.

The protein resides in the cytoplasm. It catalyses the reaction beta-D-fructose 6-phosphate + ATP = beta-D-fructose 1,6-bisphosphate + ADP + H(+). The protein operates within carbohydrate degradation; glycolysis; D-glyceraldehyde 3-phosphate and glycerone phosphate from D-glucose: step 3/4. With respect to regulation, allosterically activated by ADP and other diphosphonucleosides, and allosterically inhibited by phosphoenolpyruvate. Its function is as follows. Catalyzes the phosphorylation of D-fructose 6-phosphate to fructose 1,6-bisphosphate by ATP, the first committing step of glycolysis. This chain is ATP-dependent 6-phosphofructokinase, found in Ligilactobacillus salivarius (strain UCC118) (Lactobacillus salivarius).